We begin with the raw amino-acid sequence, 419 residues long: Light-dependent chlorophyll f synthase (419 aa).

5 helical membrane-spanning segments follow: residues 73–90, 162–177, 186–200, 241–262, and 323–337; these read YIGWFGMLAIPTLATAAI, HFIIGIISYQDREWEL, WISLAFTAPVAASVS, LHQMGVIGVLGGALLCAVHGSL, and CLAALPVAGIWSAAI. His-162 lines the a chlorophyll pocket. His-242 contributes to the a chlorophyll binding site.

It belongs to the reaction center PufL/M/PsbA/D family. Homodimer.

Its subcellular location is the cellular thylakoid membrane. Its function is as follows. Synthesizes chlorophyll f or chlorophyllide f (Chl f, 2-formyl chlorophyll a), probably by oxidation of chlorophyll a or chlorophyllide a and reduction of plastoquinone. The reaction is probably light-dependent. Chl f absorbs far red light (FRL, 707 nm in 100% methanol), and is synthesized when cells are grown in FRL, where it provides the advantage of extending the spectral range of harvested light in terrestrial cyanobacteria. Chl f synthesis is probably light-dependent. This Synechococcus sp. (strain ATCC 29403 / PCC 7335) protein is Light-dependent chlorophyll f synthase.